Consider the following 339-residue polypeptide: Deoxyhypusine hydroxylase (339 aa).

HEAT-like PBS-type repeat units follow at residues 71–97 (LKHE…VVKN) and 104–130 (CRHE…LRDD). H73, E74, H106, and E107 together coordinate Fe cation. Residues 159–183 (EKLKPSDFTSIDPAPPLPMASSQPS) form a disordered region. HEAT-like PBS-type repeat units lie at residues 200-233 (QRYR…GLKD), 238-264 (FRHE…TLSD), and 271-298 (VRHE…FLND). Fe cation is bound by residues H240, E241, H273, and E274.

Belongs to the deoxyhypusine hydroxylase family. Requires Fe(2+) as cofactor.

It localises to the cytoplasm. The protein resides in the nucleus. The enzyme catalyses [eIF5A protein]-deoxyhypusine + AH2 + O2 = [eIF5A protein]-hypusine + A + H2O. Its pathway is protein modification; eIF5A hypusination. Catalyzes the hydroxylation of the N(6)-(4-aminobutyl)-L-lysine intermediate to form hypusine, an essential post-translational modification only found in mature eIF-5A factor. In Aspergillus oryzae (strain ATCC 42149 / RIB 40) (Yellow koji mold), this protein is Deoxyhypusine hydroxylase (lia1).